Here is a 227-residue protein sequence, read N- to C-terminus: Phosphatidylserine decarboxylase proenzyme (227 aa).

Catalysis depends on Ser-169, which acts as the Schiff-base intermediate with substrate; via pyruvic acid. Ser-169 is modified (pyruvic acid (Ser); by autocatalysis). The tract at residues 197-227 (GRIPTPESGRSSSAEATAAPSASSARRSSAS) is disordered. Low complexity predominate over residues 206–227 (RSSSAEATAAPSASSARRSSAS).

The protein belongs to the phosphatidylserine decarboxylase family. PSD-A subfamily. Heterodimer of a large membrane-associated beta subunit and a small pyruvoyl-containing alpha subunit. It depends on pyruvate as a cofactor. Is synthesized initially as an inactive proenzyme. Formation of the active enzyme involves a self-maturation process in which the active site pyruvoyl group is generated from an internal serine residue via an autocatalytic post-translational modification. Two non-identical subunits are generated from the proenzyme in this reaction, and the pyruvate is formed at the N-terminus of the alpha chain, which is derived from the carboxyl end of the proenzyme. The post-translation cleavage follows an unusual pathway, termed non-hydrolytic serinolysis, in which the side chain hydroxyl group of the serine supplies its oxygen atom to form the C-terminus of the beta chain, while the remainder of the serine residue undergoes an oxidative deamination to produce ammonia and the pyruvoyl prosthetic group on the alpha chain.

It localises to the cell membrane. It catalyses the reaction a 1,2-diacyl-sn-glycero-3-phospho-L-serine + H(+) = a 1,2-diacyl-sn-glycero-3-phosphoethanolamine + CO2. Its pathway is phospholipid metabolism; phosphatidylethanolamine biosynthesis; phosphatidylethanolamine from CDP-diacylglycerol: step 2/2. Functionally, catalyzes the formation of phosphatidylethanolamine (PtdEtn) from phosphatidylserine (PtdSer). The sequence is that of Phosphatidylserine decarboxylase proenzyme from Salinibacter ruber (strain DSM 13855 / M31).